Reading from the N-terminus, the 284-residue chain is 2,3,4,5-tetrahydropyridine-2,6-dicarboxylate N-succinyltransferase (284 aa).

The substrate site is built by arginine 111 and aspartate 148.

It belongs to the transferase hexapeptide repeat family. In terms of assembly, homotrimer.

It is found in the cytoplasm. The catalysed reaction is (S)-2,3,4,5-tetrahydrodipicolinate + succinyl-CoA + H2O = (S)-2-succinylamino-6-oxoheptanedioate + CoA. It functions in the pathway amino-acid biosynthesis; L-lysine biosynthesis via DAP pathway; LL-2,6-diaminopimelate from (S)-tetrahydrodipicolinate (succinylase route): step 1/3. This Brucella anthropi (strain ATCC 49188 / DSM 6882 / CCUG 24695 / JCM 21032 / LMG 3331 / NBRC 15819 / NCTC 12168 / Alc 37) (Ochrobactrum anthropi) protein is 2,3,4,5-tetrahydropyridine-2,6-dicarboxylate N-succinyltransferase.